Here is an 877-residue protein sequence, read N- to C-terminus: Translation initiation factor IF-2 (877 aa).

The span at 66 to 115 shows a compositional bias: basic and acidic residues; that stretch reads PKKESTAKKTTKKDEVKKEEKKTTTKKESKNPAKAVSEKKDEVKKEEKQP. Disordered stretches follow at residues 66–127, 187–208, and 241–290; these read PKKE…LEEK, SDES…SKKE, and ENKP…KESE. Residues 192 to 201 are compositionally biased toward basic residues; the sequence is KRKKKEKKNH. Over residues 245–265 the composition is skewed to polar residues; that stretch reads AQPTNKKQPNILKQSLNNSIN. A tr-type G domain is found at 376–543; the sequence is QRAPVITIMG…IVLLQADILE (168 aa). The segment at 385 to 392 is G1; that stretch reads GHVDHGKT. 385-392 contributes to the GTP binding site; that stretch reads GHVDHGKT. The interval 410–414 is G2; it reads GITQH. The interval 431 to 434 is G3; it reads DTPG. GTP is bound by residues 431 to 435 and 485 to 488; these read DTPGH and NKMD. Residues 485–488 are G4; sequence NKMD. A G5 region spans residues 521 to 523; that stretch reads SAK.

Belongs to the TRAFAC class translation factor GTPase superfamily. Classic translation factor GTPase family. IF-2 subfamily.

It localises to the cytoplasm. Its function is as follows. One of the essential components for the initiation of protein synthesis. Protects formylmethionyl-tRNA from spontaneous hydrolysis and promotes its binding to the 30S ribosomal subunits. Also involved in the hydrolysis of GTP during the formation of the 70S ribosomal complex. This chain is Translation initiation factor IF-2, found in Campylobacter lari (strain RM2100 / D67 / ATCC BAA-1060).